The sequence spans 345 residues: 3-hydroxy-5-methyl-1-naphthoate 3-O-methyltransferase (345 aa).

An S-adenosyl-L-methionine-binding site is contributed by D205. The active-site Proton acceptor is H252.

This sequence belongs to the class I-like SAM-binding methyltransferase superfamily. Cation-independent O-methyltransferase family.

It carries out the reaction 3-hydroxy-5-methyl-1-naphthoate + S-adenosyl-L-methionine = 3-methoxy-5-methyl-1-naphthoate + S-adenosyl-L-homocysteine + H(+). It participates in antibiotic biosynthesis. Its activity is regulated as follows. Inhibited by different divalent cations, such as Mg(2+), Mn(2+), Fe(2+), Cu(2+) and Zn(2+). Functionally, O-methyltransferase that mediates the formation of 3-methoxy-5-methyl-1-naphthoate from 3-hydroxy-5-methyl-1-naphthoate in the biosynthesis of the antitumor antibiotic azinomycin B. This chain is 3-hydroxy-5-methyl-1-naphthoate 3-O-methyltransferase, found in Streptomyces sahachiroi.